The chain runs to 343 residues: Phenylalanine--tRNA ligase alpha subunit (343 aa).

Position 268 (Glu268) interacts with Mg(2+).

It belongs to the class-II aminoacyl-tRNA synthetase family. Phe-tRNA synthetase alpha subunit type 1 subfamily. As to quaternary structure, tetramer of two alpha and two beta subunits. The cofactor is Mg(2+).

It is found in the cytoplasm. It carries out the reaction tRNA(Phe) + L-phenylalanine + ATP = L-phenylalanyl-tRNA(Phe) + AMP + diphosphate + H(+). The protein is Phenylalanine--tRNA ligase alpha subunit of Cupriavidus necator (strain ATCC 17699 / DSM 428 / KCTC 22496 / NCIMB 10442 / H16 / Stanier 337) (Ralstonia eutropha).